Reading from the N-terminus, the 874-residue chain is Speckle targeted PIP5K1A-regulated poly(A) polymerase (874 aa).

A Matrin-type zinc finger spans residues 16-46 (FRCCLCHVTTANRPSLDAHLGGRKHRHLVEL). In terms of domain architecture, RRM spans 56–128 (RSVFVSGFPR…HRLRVRPREQ (73 aa)). A disordered region spans residues 113–146 (QHSLGGHRLRVRPREQKEFQSPASKSPKGAAPDS). S205 contributes to the ATP binding site. Mg(2+)-binding residues include D216 and D218. Residues D216 and D218 each contribute to the UTP site. Residues 252-334 (QALACTPASP…ELAETPKEEK (83 aa)) form a disordered region. Positions 259–269 (ASPPDSQPPAS) are enriched in pro residues. The segment covering 280 to 291 (TPSSSLAPQTPD) has biased composition (polar residues). Position 392 (N392) interacts with ATP. Residues N392, R414, Y432, and H549 each contribute to the UTP site. A PAP-associated domain is found at 491 to 549 (LSSLLAQFFSCVSCWDLRGSLLSLREGQALPVAGGLPSNLWEGLRLGPLNLQDPFDLSH). Residues 598-874 (SSPSSLLSAT…FLPQAIRHLK (277 aa)) form a KA1; binds the bulging loops of U6 snRNA but is dispensable for terminal uridylyltransferase activity region. Disordered stretches follow at residues 638-662 (ATKR…KRLK) and 705-761 (MQSP…ASLP). Position 750 is a phosphoserine (S750).

It belongs to the DNA polymerase type-B-like family. In terms of assembly, associates with the cleavage and polyadenylation specificity factor (CPSF) complex. Interacts with CPSF1 and CPSF3; the interaction is direct. Interacts with PIP5K1A. Requires Mg(2+) as cofactor. Mn(2+) is required as a cofactor. Post-translationally, phosphorylated by CK1 in the proline-rich (Pro-rich) region. In terms of tissue distribution, widely expressed.

It is found in the nucleus. The protein localises to the nucleolus. It localises to the nucleus speckle. It carries out the reaction RNA(n) + UTP = RNA(n)-3'-uridine ribonucleotide + diphosphate. It catalyses the reaction RNA(n) + ATP = RNA(n)-3'-adenine ribonucleotide + diphosphate. Adenylyltransferase activity is specifically phosphatidylinositol 4,5-bisphosphate (PtdIns(4,5)P2). Poly(A) polymerase that creates the 3'-poly(A) tail of specific pre-mRNAs. Localizes to nuclear speckles together with PIP5K1A and mediates polyadenylation of a select set of mRNAs, such as HMOX1. In addition to polyadenylation, it is also required for the 3'-end cleavage of pre-mRNAs: binds to the 3'UTR of targeted pre-mRNAs and promotes the recruitment and assembly of the CPSF complex on the 3'UTR of pre-mRNAs. In addition to adenylyltransferase activity, also has uridylyltransferase activity. However, the ATP ratio is higher than UTP in cells, suggesting that it functions primarily as a poly(A) polymerase. Acts as a specific terminal uridylyltransferase for U6 snRNA in vitro: responsible for a controlled elongation reaction that results in the restoration of the four 3'-terminal UMP-residues found in newly transcribed U6 snRNA. Not involved in replication-dependent histone mRNA degradation. In Homo sapiens (Human), this protein is Speckle targeted PIP5K1A-regulated poly(A) polymerase (TUT1).